A 272-amino-acid polypeptide reads, in one-letter code: uncharacterized protein (272 aa).

One can recognise an AB hydrolase-1 domain in the interval 20–133; the sequence is PVLIFIPGAN…PPINTFLPDS (114 aa).

The protein belongs to the AB hydrolase superfamily.

This is an uncharacterized protein from Staphylococcus aureus (strain MSSA476).